The following is a 95-amino-acid chain: Co-chaperonin GroES (95 aa).

This sequence belongs to the GroES chaperonin family. Heptamer of 7 subunits arranged in a ring. Interacts with the chaperonin GroEL.

It is found in the cytoplasm. Its function is as follows. Together with the chaperonin GroEL, plays an essential role in assisting protein folding. The GroEL-GroES system forms a nano-cage that allows encapsulation of the non-native substrate proteins and provides a physical environment optimized to promote and accelerate protein folding. GroES binds to the apical surface of the GroEL ring, thereby capping the opening of the GroEL channel. The sequence is that of Co-chaperonin GroES from Clostridium botulinum (strain ATCC 19397 / Type A).